The chain runs to 626 residues: Glyco-Gag protein (626 aa).

Over 1-67 (LGDVPGTSGA…VWSRSRAARP (67 aa)) the chain is Cytoplasmic. Residues 68-86 (VCCSIVLCCFCLTVFLYLS) traverse the membrane as a helical segment. Over 87-626 (ENMGQTATTP…PQASLLTLDD (540 aa)) the chain is Extracellular. N-linked (GlcNAc...) asparagine; by host glycosylation is present at N113. Pro residues-rich tracts occupy residues 199-212 (PSAP…PLST) and 249-261 (DPPP…PPSP). The disordered stretch occupies residues 199 to 306 (PSAPSLPPEP…STTSQAFPLR (108 aa)). N480 carries an N-linked (GlcNAc...) asparagine; by host glycan. 2 stretches are compositionally biased toward basic and acidic residues: residues 522–554 (RETP…EKER) and 574–607 (RQDR…DCPK). The interval 522-626 (RETPEEREER…PQASLLTLDD (105 aa)) is disordered. The CCHC-type zinc finger occupies 590–607 (DQCAYCKEKGHWARDCPK).

Post-translationally, glycosylated by host. In terms of processing, cleaved by host near the middle of the molecule, releasing the c-terminal half containing capsid and nucleoprotein domains op GAG.

It localises to the host cell membrane. Functionally, plays a role in viral particle release. Presumably acts by facilitating the fission of the virion bud at the cell surface. May prevent the antiviral activity of murine APOBEC3. In Mus musculus (Mouse), this protein is Glyco-Gag protein.